The following is a 276-amino-acid chain: ADP-dependent (S)-NAD(P)H-hydrate dehydratase (276 aa).

The 269-residue stretch at 7–275 (TEEHVRATLP…DILPRVWKRF (269 aa)) folds into the YjeF C-terminal domain. (6S)-NADPHX contacts are provided by Ala-42, Gly-104, and His-149. AMP is bound by residues 186–190 (KGNQT) and Gly-215. Asp-216 serves as a coordination point for (6S)-NADPHX.

It belongs to the NnrD/CARKD family. As to quaternary structure, homotetramer. Requires Mg(2+) as cofactor.

The enzyme catalyses (6S)-NADHX + ADP = AMP + phosphate + NADH + H(+). It carries out the reaction (6S)-NADPHX + ADP = AMP + phosphate + NADPH + H(+). Its function is as follows. Catalyzes the dehydration of the S-form of NAD(P)HX at the expense of ADP, which is converted to AMP. Together with NAD(P)HX epimerase, which catalyzes the epimerization of the S- and R-forms, the enzyme allows the repair of both epimers of NAD(P)HX, a damaged form of NAD(P)H that is a result of enzymatic or heat-dependent hydration. This chain is ADP-dependent (S)-NAD(P)H-hydrate dehydratase, found in Bacillus subtilis (strain 168).